We begin with the raw amino-acid sequence, 1257 residues long: Pesticidal crystal protein Cry12Aa (1257 aa).

It belongs to the delta endotoxin family.

Endotoxin with nematicidal activity. The polypeptide is Pesticidal crystal protein Cry12Aa (cry12Aa) (Bacillus thuringiensis).